Here is a 222-residue protein sequence, read N- to C-terminus: MKQESAAPNTPPTSQSPTPSAQFPRNDGDPQALWIFGYGSLVWRPDFAYSDSRVGFVRGYSRRFWQGDTFHRGSDKMPGRVVTLLEDHEGCTWGVAYQVQGEQVSKALKYLNVREAVLGGYDTKEVTFYPQDAPDQPLKALAYVATPQNPGYLGPAPEEAIATQILACRGFSGHNLEYLLRLADFMQLCGPQAQDEHLAAIVDAVGTMLPCFCPTEQALALV.

Residues 1-22 (MKQESAAPNTPPTSQSPTPSAQ) show a composition bias toward low complexity. Residues 1-24 (MKQESAAPNTPPTSQSPTPSAQFP) are disordered. 35-40 (IFGYGS) contributes to the substrate binding site. Catalysis depends on E115, which acts as the Proton acceptor.

It belongs to the gamma-glutamylcyclotransferase family. ChaC subfamily. As to quaternary structure, interacts with NOTCH1 (via extracellular region).

It localises to the cytoplasm. Its subcellular location is the cytosol. The protein localises to the golgi apparatus. It is found in the trans-Golgi network. The catalysed reaction is glutathione = L-cysteinylglycine + 5-oxo-L-proline. Its function is as follows. Catalyzes the cleavage of glutathione into 5-oxo-L-proline and a Cys-Gly dipeptide. Acts specifically on glutathione, but not on other gamma-glutamyl peptides. Glutathione depletion is an important factor for apoptosis initiation and execution. Acts as a pro-apoptotic component of the unfolded protein response pathway by mediating the pro-apoptotic effects of the ATF4-ATF3-DDIT3/CHOP cascade. Negative regulator of Notch signaling pathway involved in embryonic neurogenesis: acts by inhibiting Notch cleavage by furin, maintaining Notch in an immature inactive form, thereby promoting neurogenesis in embryos. In Homo sapiens (Human), this protein is Glutathione-specific gamma-glutamylcyclotransferase 1.